The primary structure comprises 470 residues: Glutamate--tRNA ligase (470 aa).

Residues 12–22 carry the 'HIGH' region motif; that stretch reads PSPTGIFHVGG. Residues cysteine 103, cysteine 105, cysteine 125, and aspartate 127 each coordinate Zn(2+). The short motif at 236–240 is the 'KMSKS' region element; sequence KLSKR. Lysine 239 lines the ATP pocket.

This sequence belongs to the class-I aminoacyl-tRNA synthetase family. Glutamate--tRNA ligase type 1 subfamily. As to quaternary structure, monomer. Zn(2+) is required as a cofactor.

The protein resides in the cytoplasm. The enzyme catalyses tRNA(Glu) + L-glutamate + ATP = L-glutamyl-tRNA(Glu) + AMP + diphosphate. In terms of biological role, catalyzes the attachment of glutamate to tRNA(Glu) in a two-step reaction: glutamate is first activated by ATP to form Glu-AMP and then transferred to the acceptor end of tRNA(Glu). This chain is Glutamate--tRNA ligase, found in Frankia alni (strain DSM 45986 / CECT 9034 / ACN14a).